A 562-amino-acid polypeptide reads, in one-letter code: Arginine--tRNA ligase (562 aa).

The 'HIGH' region signature appears at Ala-129–His-139.

This sequence belongs to the class-I aminoacyl-tRNA synthetase family. Monomer.

The protein resides in the cytoplasm. It catalyses the reaction tRNA(Arg) + L-arginine + ATP = L-arginyl-tRNA(Arg) + AMP + diphosphate. This chain is Arginine--tRNA ligase, found in Xanthomonas campestris pv. campestris (strain B100).